Reading from the N-terminus, the 337-residue chain is Ral GTPase-activating protein subunit alpha-1 (337 aa).

As to quaternary structure, component of the heterodimeric RalGAP1 complex with RALGAPB. Heterodimerization is required for activity. Interacts with the HLH region of TCF3/isoform E12.

The protein resides in the cytoplasm. It is found in the nucleus. Its function is as follows. Catalytic subunit of the heterodimeric RalGAP1 complex which acts as a GTPase activator for the Ras-like small GTPases RALA and RALB. The chain is Ral GTPase-activating protein subunit alpha-1 from Sus scrofa (Pig).